The chain runs to 372 residues: Queuine tRNA-ribosyltransferase (372 aa).

Catalysis depends on aspartate 90, which acts as the Proton acceptor. Substrate contacts are provided by residues 90-94 (DSGGF), aspartate 144, glutamine 193, and glycine 220. Residues 251-257 (GVGTPED) form an RNA binding region. Aspartate 270 functions as the Nucleophile in the catalytic mechanism. Residues 275–279 (TRNAR) are RNA binding; important for wobble base 34 recognition. Zn(2+) is bound by residues cysteine 308, cysteine 310, cysteine 313, and histidine 339.

It belongs to the queuine tRNA-ribosyltransferase family. As to quaternary structure, homodimer. Within each dimer, one monomer is responsible for RNA recognition and catalysis, while the other monomer binds to the replacement base PreQ1. Zn(2+) serves as cofactor.

The enzyme catalyses 7-aminomethyl-7-carbaguanine + guanosine(34) in tRNA = 7-aminomethyl-7-carbaguanosine(34) in tRNA + guanine. The protein operates within tRNA modification; tRNA-queuosine biosynthesis. In terms of biological role, catalyzes the base-exchange of a guanine (G) residue with the queuine precursor 7-aminomethyl-7-deazaguanine (PreQ1) at position 34 (anticodon wobble position) in tRNAs with GU(N) anticodons (tRNA-Asp, -Asn, -His and -Tyr). Catalysis occurs through a double-displacement mechanism. The nucleophile active site attacks the C1' of nucleotide 34 to detach the guanine base from the RNA, forming a covalent enzyme-RNA intermediate. The proton acceptor active site deprotonates the incoming PreQ1, allowing a nucleophilic attack on the C1' of the ribose to form the product. After dissociation, two additional enzymatic reactions on the tRNA convert PreQ1 to queuine (Q), resulting in the hypermodified nucleoside queuosine (7-(((4,5-cis-dihydroxy-2-cyclopenten-1-yl)amino)methyl)-7-deazaguanosine). The chain is Queuine tRNA-ribosyltransferase from Sulfurimonas denitrificans (strain ATCC 33889 / DSM 1251) (Thiomicrospira denitrificans (strain ATCC 33889 / DSM 1251)).